The following is a 412-amino-acid chain: Glucose-1-phosphate adenylyltransferase (412 aa).

Alpha-D-glucose 1-phosphate-binding positions include Gly169, Glu184–Lys185, and Ser201.

It belongs to the bacterial/plant glucose-1-phosphate adenylyltransferase family. As to quaternary structure, homotetramer.

It carries out the reaction alpha-D-glucose 1-phosphate + ATP + H(+) = ADP-alpha-D-glucose + diphosphate. The protein operates within glycan biosynthesis; glycogen biosynthesis. In terms of biological role, involved in the biosynthesis of ADP-glucose, a building block required for the elongation reactions to produce glycogen. Catalyzes the reaction between ATP and alpha-D-glucose 1-phosphate (G1P) to produce pyrophosphate and ADP-Glc. This is Glucose-1-phosphate adenylyltransferase from Geobacter metallireducens (strain ATCC 53774 / DSM 7210 / GS-15).